A 436-amino-acid chain; its full sequence is MFESKINPLWQSFILAVQEEVKPALGCTEPISLALAAAAAAAELDGTVERIDAWVSPNLMKNGMGVTVPGTGMVGLPIAAALGALGGDAKAGLEVLKDASAKAVADAKAMLAAGHVAVMLQEPCNDILFSRAKVYSGDSWACVTIVGDHTNIVRIETNKGVVFTQADNAQEEEKNSPLGVLSHTSLEEILAFVNAVPFDAIRFILDAARLNGALSQEGLRGSWGLHIGSTLAKQCDRGLLAKDLSTAILIRTSAASDARMGGATLPAMSNSGSGNQGITATVPVMVVAEHVGADDERLARALMLSHLSAIYIHHQLPRLSALCAATTAAMGAAAGMAWLIDGRYDTIAMAISSMIGDVSGMICDGASNSCAMKVSTSASAAWKAVLMALDDTAVTGNEGIVAHNVEQSIANLCSLACRSMQQTDKQIIEIMASKAH.

Belongs to the UPF0597 family.

The polypeptide is UPF0597 protein YhaM (Salmonella dublin (strain CT_02021853)).